The chain runs to 304 residues: Protein BOBBER 1 (304 aa).

Residue Ala2 is modified to N-acetylalanine. The stretch at 54-106 (EDEIVVAVRAAKEKLKKAEKKKAEKESVKPVEKKAEKEIVKLVEKKVEKESVK) forms a coiled coil. A disordered region spans residues 111 to 141 (ASSAEPIEVEKPKEEEEKKESGPIVPNKGNG). The span at 118–131 (EVEKPKEEEEKKES) shows a compositional bias: basic and acidic residues. The region spanning 142-231 (TDLENYSWIQ…DQMEWWKCCV (90 aa)) is the CS domain.

Expressed in all seedling tissues with highest expression levels at the root tip.

The protein resides in the cytoplasm. The protein localises to the cytoplasmic granule. Its function is as follows. Small heat shock protein required for the establishment of auxin gradients and for patterning of the apical domain of the embryo. Involved in the specification of the cotyledon primordia. Also required for normal inflorescence and floral meristem function, normal developmental patterning and thermotolerance. Acts as a molecular chaperone. In Arabidopsis thaliana (Mouse-ear cress), this protein is Protein BOBBER 1 (BOB1).